The primary structure comprises 250 residues: 5'-nucleotidase SurE (250 aa).

The a divalent metal cation site is built by Asp-8, Asp-9, Ser-40, and Asn-95.

Belongs to the SurE nucleotidase family. A divalent metal cation is required as a cofactor.

It is found in the cytoplasm. The catalysed reaction is a ribonucleoside 5'-phosphate + H2O = a ribonucleoside + phosphate. Nucleotidase that shows phosphatase activity on nucleoside 5'-monophosphates. The protein is 5'-nucleotidase SurE of Nitratidesulfovibrio vulgaris (strain ATCC 29579 / DSM 644 / CCUG 34227 / NCIMB 8303 / VKM B-1760 / Hildenborough) (Desulfovibrio vulgaris).